Here is a 190-residue protein sequence, read N- to C-terminus: Probable molybdenum cofactor guanylyltransferase (190 aa).

Residues 9 to 11, K21, D65, and D94 each bind GTP; that span reads LCG. D94 provides a ligand contact to Mg(2+).

It belongs to the MobA family. It depends on Mg(2+) as a cofactor.

The protein resides in the cytoplasm. It catalyses the reaction Mo-molybdopterin + GTP + H(+) = Mo-molybdopterin guanine dinucleotide + diphosphate. In terms of biological role, transfers a GMP moiety from GTP to Mo-molybdopterin (Mo-MPT) cofactor (Moco or molybdenum cofactor) to form Mo-molybdopterin guanine dinucleotide (Mo-MGD) cofactor. This Flavobacterium johnsoniae (strain ATCC 17061 / DSM 2064 / JCM 8514 / BCRC 14874 / CCUG 350202 / NBRC 14942 / NCIMB 11054 / UW101) (Cytophaga johnsonae) protein is Probable molybdenum cofactor guanylyltransferase.